A 95-amino-acid chain; its full sequence is MESRDIILRPVVTEASMALIDNKRYTFDVDPRATKTQVKKAIEEIFEVTVIKINIMNVKGKLKRQGRYAGYTKKRRKAIVQLSADSKEIQLFGEE.

It belongs to the universal ribosomal protein uL23 family. As to quaternary structure, part of the 50S ribosomal subunit. Contacts protein L29, and trigger factor when it is bound to the ribosome.

Functionally, one of the early assembly proteins it binds 23S rRNA. One of the proteins that surrounds the polypeptide exit tunnel on the outside of the ribosome. Forms the main docking site for trigger factor binding to the ribosome. In Pediococcus pentosaceus (strain ATCC 25745 / CCUG 21536 / LMG 10740 / 183-1w), this protein is Large ribosomal subunit protein uL23.